Reading from the N-terminus, the 258-residue chain is Probable enoyl-CoA hydratase (258 aa).

Belongs to the enoyl-CoA hydratase/isomerase family.

The catalysed reaction is a (3S)-3-hydroxyacyl-CoA = a (2E)-enoyl-CoA + H2O. It catalyses the reaction a 4-saturated-(3S)-3-hydroxyacyl-CoA = a (3E)-enoyl-CoA + H2O. It participates in lipid metabolism; fatty acid beta-oxidation. Functionally, involved in the degradation of long-chain fatty acids. The sequence is that of Probable enoyl-CoA hydratase (fadB) from Bacillus subtilis (strain 168).